Consider the following 91-residue polypeptide: Small ribosomal subunit protein uS19 (91 aa).

The protein belongs to the universal ribosomal protein uS19 family.

Functionally, protein S19 forms a complex with S13 that binds strongly to the 16S ribosomal RNA. The protein is Small ribosomal subunit protein uS19 of Pseudoalteromonas atlantica (strain T6c / ATCC BAA-1087).